A 426-amino-acid chain; its full sequence is Glucose-1-phosphate adenylyltransferase (426 aa).

Residues Gly-165, 180–181 (EK), and Ser-191 each bind alpha-D-glucose 1-phosphate.

This sequence belongs to the bacterial/plant glucose-1-phosphate adenylyltransferase family. In terms of assembly, homotetramer.

It catalyses the reaction alpha-D-glucose 1-phosphate + ATP + H(+) = ADP-alpha-D-glucose + diphosphate. It functions in the pathway glycan biosynthesis; glycogen biosynthesis. In terms of biological role, involved in the biosynthesis of ADP-glucose, a building block required for the elongation reactions to produce glycogen. Catalyzes the reaction between ATP and alpha-D-glucose 1-phosphate (G1P) to produce pyrophosphate and ADP-Glc. This Ruminiclostridium cellulolyticum (strain ATCC 35319 / DSM 5812 / JCM 6584 / H10) (Clostridium cellulolyticum) protein is Glucose-1-phosphate adenylyltransferase.